Consider the following 352-residue polypeptide: Deoxyhypusine synthase-like protein (352 aa).

Belongs to the deoxyhypusine synthase family.

The chain is Deoxyhypusine synthase-like protein from Coxiella burnetii (strain Dugway 5J108-111).